The primary structure comprises 557 residues: UvrABC system protein C (557 aa).

The region spanning 14 to 89 (EEPGVYIFKN…IKKYRPKYNV (76 aa)) is the GIY-YIG domain. Positions 194-229 (EEVFDYLKEKMETHSKMLDFENAAKYRDLLLNLSNV) constitute a UVR domain.

This sequence belongs to the UvrC family. In terms of assembly, interacts with UvrB in an incision complex.

Its subcellular location is the cytoplasm. The UvrABC repair system catalyzes the recognition and processing of DNA lesions. UvrC both incises the 5' and 3' sides of the lesion. The N-terminal half is responsible for the 3' incision and the C-terminal half is responsible for the 5' incision. The sequence is that of UvrABC system protein C from Thermotoga maritima (strain ATCC 43589 / DSM 3109 / JCM 10099 / NBRC 100826 / MSB8).